Reading from the N-terminus, the 406-residue chain is Leu/Ile/Val-binding protein homolog 5 (406 aa).

Positions 1–29 (MIGTRLPAWTRVLACGVAGLSLMTISAKA) are cleaved as a signal peptide.

Belongs to the leucine-binding protein family.

Component of an amino-acid transport system. The chain is Leu/Ile/Val-binding protein homolog 5 from Brucella suis biovar 1 (strain 1330).